A 222-amino-acid chain; its full sequence is UPF0758 protein Ppha_0935 (222 aa).

Residues 100–222 (KIQAARDVFE…CFSFRESGLL (123 aa)) form the MPN domain. The Zn(2+) site is built by His-171, His-173, and Asp-184. Positions 171–184 (HNHPSGDVEPSNAD) match the JAMM motif motif.

It belongs to the UPF0758 family.

The polypeptide is UPF0758 protein Ppha_0935 (Pelodictyon phaeoclathratiforme (strain DSM 5477 / BU-1)).